The sequence spans 317 residues: Methionyl-tRNA formyltransferase (317 aa).

109 to 112 (SLLP) lines the (6S)-5,6,7,8-tetrahydrofolate pocket.

This sequence belongs to the Fmt family.

The enzyme catalyses L-methionyl-tRNA(fMet) + (6R)-10-formyltetrahydrofolate = N-formyl-L-methionyl-tRNA(fMet) + (6S)-5,6,7,8-tetrahydrofolate + H(+). Functionally, attaches a formyl group to the free amino group of methionyl-tRNA(fMet). The formyl group appears to play a dual role in the initiator identity of N-formylmethionyl-tRNA by promoting its recognition by IF2 and preventing the misappropriation of this tRNA by the elongation apparatus. The polypeptide is Methionyl-tRNA formyltransferase (Halalkalibacterium halodurans (strain ATCC BAA-125 / DSM 18197 / FERM 7344 / JCM 9153 / C-125) (Bacillus halodurans)).